The sequence spans 131 residues: Dihydroneopterin aldolase 2 (131 aa).

Substrate-binding positions include Glu29, Tyr61, and 80–81 (LE). Residue Lys107 is the Proton donor/acceptor of the active site.

Belongs to the DHNA family. As to quaternary structure, homooctamer. Forms a hollow cylinder assembled from two ring-shaped tetramers. Expressed in roots, leaves, stems and siliques.

It carries out the reaction 7,8-dihydroneopterin = 6-hydroxymethyl-7,8-dihydropterin + glycolaldehyde. It participates in cofactor biosynthesis; tetrahydrofolate biosynthesis; 2-amino-4-hydroxy-6-hydroxymethyl-7,8-dihydropteridine diphosphate from 7,8-dihydroneopterin triphosphate: step 3/4. Functionally, catalyzes the conversion of 7,8-dihydroneopterin into 6-hydroxymethyl-7,8-dihydropterin, a biosynthetic precursor of the vitamin tetrahydrofolate. Can use L-threo-dihydroneopterin and D-erythro-dihydroneopterin as substrates for the formation of 6-hydroxymethyldihydropterin, but it can also catalyze the epimerization of carbon 2' of dihydroneopterin and dihydromonapterin. In Arabidopsis thaliana (Mouse-ear cress), this protein is Dihydroneopterin aldolase 2.